A 295-amino-acid polypeptide reads, in one-letter code: Bifunctional protein FolD (295 aa).

Residues G172–S174, S197, and I238 contribute to the NADP(+) site.

The protein belongs to the tetrahydrofolate dehydrogenase/cyclohydrolase family. In terms of assembly, homodimer.

The catalysed reaction is (6R)-5,10-methylene-5,6,7,8-tetrahydrofolate + NADP(+) = (6R)-5,10-methenyltetrahydrofolate + NADPH. It catalyses the reaction (6R)-5,10-methenyltetrahydrofolate + H2O = (6R)-10-formyltetrahydrofolate + H(+). Its pathway is one-carbon metabolism; tetrahydrofolate interconversion. In terms of biological role, catalyzes the oxidation of 5,10-methylenetetrahydrofolate to 5,10-methenyltetrahydrofolate and then the hydrolysis of 5,10-methenyltetrahydrofolate to 10-formyltetrahydrofolate. The polypeptide is Bifunctional protein FolD (Rickettsia akari (strain Hartford)).